A 1517-amino-acid chain; its full sequence is uncharacterized protein (1517 aa).

Over residues 1–13 the composition is skewed to polar residues; sequence MNQFPNQPGNFGQ. Residues 1–26 form a disordered region; sequence MNQFPNQPGNFGQNYYKPVQGSIPAN. N-linked (GlcNAc...) asparagine glycosylation is found at Asn-35, Asn-40, and Asn-76. The next 5 helical transmembrane spans lie at 231–251, 397–417, 510–530, 612–632, and 720–740; these read AIDF…AVPI, AIGL…TVWC, FVPL…KDWI, PNIV…FFAL, and VFDC…VVLL. An N-linked (GlcNAc...) asparagine glycan is attached at Asn-917. 4 helical membrane passes run 956-976, 985-1005, 1051-1071, and 1114-1134; these read FVYA…VPPL, VPAF…VNSE, VKLD…AFWS, and GIGF…TYLL. Asn-1178 carries N-linked (GlcNAc...) asparagine glycosylation. The helical transmembrane segment at 1261 to 1281 threads the bilayer; sequence PYALPLLDSGMVPVSTQLAIV. An N-linked (GlcNAc...) asparagine glycan is attached at Asn-1321. 2 consecutive transmembrane segments (helical) span residues 1353–1373 and 1408–1428; these read APVV…TFEV and VVVV…PVVI.

To S.pombe SpAC22F3.04.

It localises to the membrane. This is an uncharacterized protein from Schizosaccharomyces pombe (strain 972 / ATCC 24843) (Fission yeast).